We begin with the raw amino-acid sequence, 210 residues long: SGYTLTYFPLRGRAEAMRLLLGDQGVSWTDDEVQMQDWAAGIRDLKKNAVFGQIPRFQEGDFVLYQSQTILRLLARYGLSGSNEREIAINEMMNDGVEDLRLKYYKFIFWDNEANKEKFLEELATQLGYFERILTNNAGKTFVLVGDKISYADYNLLDTLFCVLDLSPTCLSGFPLLSDYVERLGKRPKLQQYLKSEGRKRRPINGNGKQ.

Residues Ser-1 to Ser-82 form the GST N-terminal domain. Glutathione contacts are provided by residues Tyr-7, Arg-13, Trp-38, Lys-46, Gln-53–Ile-54, and Gln-66–Ser-67. In terms of domain architecture, GST C-terminal spans Asn-83–Ile-204.

The protein belongs to the GST superfamily. Pi family. As to quaternary structure, homodimer. In terms of tissue distribution, liver, kidney, muscle, skin, lung and ovary.

It carries out the reaction RX + glutathione = an S-substituted glutathione + a halide anion + H(+). Its function is as follows. Conjugation of reduced glutathione to a wide number of exogenous and endogenous hydrophobic electrophiles. The polypeptide is Glutathione S-transferase P 2 (Bufo bufo (European toad)).